A 446-amino-acid chain; its full sequence is Probable tRNA modification GTPase MnmE (446 aa).

Positions 28, 87, and 126 each coordinate (6S)-5-formyl-5,6,7,8-tetrahydrofolate. The region spanning 218-373 is the TrmE-type G domain; sequence GIQVALLGPA…LKQLIWQQAT (156 aa). N228 contacts K(+). Residues 228 to 233, 247 to 253, and 272 to 275 contribute to the GTP site; these read NAGKST, TPIAGTT, and DTAG. Mg(2+) is bound at residue S232. 3 residues coordinate K(+): T247, I249, and T252. T253 contacts Mg(2+). Residue K446 coordinates (6S)-5-formyl-5,6,7,8-tetrahydrofolate.

Belongs to the TRAFAC class TrmE-Era-EngA-EngB-Septin-like GTPase superfamily. TrmE GTPase family. K(+) is required as a cofactor.

It localises to the plastid. It is found in the chloroplast. Exhibits a very high intrinsic GTPase hydrolysis rate. Involved in the addition of a carboxymethylaminomethyl (cmnm) group at the wobble position (U34) of certain tRNAs, forming tRNA-cmnm(5)s(2)U34. The protein is Probable tRNA modification GTPase MnmE of Cyanidioschyzon merolae (strain NIES-3377 / 10D) (Unicellular red alga).